A 451-amino-acid chain; its full sequence is Bifunctional protein GlmU (451 aa).

Residues Met-1–Arg-217 are pyrophosphorylase. UDP-N-acetyl-alpha-D-glucosamine contacts are provided by residues Leu-6–Gly-9, Lys-20, Gln-68, Gly-73–Thr-74, Tyr-95–Asp-97, Gly-134, Glu-146, Asn-161, and Asn-215. A Mg(2+)-binding site is contributed by Asp-97. Asn-215 is a Mg(2+) binding site. A linker region spans residues Ile-218–Glu-238. The segment at Gly-239–Glu-451 is N-acetyltransferase. UDP-N-acetyl-alpha-D-glucosamine-binding residues include Arg-320 and Lys-338. His-350 (proton acceptor) is an active-site residue. UDP-N-acetyl-alpha-D-glucosamine contacts are provided by Tyr-353 and Asn-364. Residues Ala-367, Asn-373 to Tyr-374, Ser-392, Ala-410, and Arg-427 each bind acetyl-CoA.

This sequence in the N-terminal section; belongs to the N-acetylglucosamine-1-phosphate uridyltransferase family. In the C-terminal section; belongs to the transferase hexapeptide repeat family. Homotrimer. Mg(2+) is required as a cofactor.

The protein resides in the cytoplasm. The catalysed reaction is alpha-D-glucosamine 1-phosphate + acetyl-CoA = N-acetyl-alpha-D-glucosamine 1-phosphate + CoA + H(+). The enzyme catalyses N-acetyl-alpha-D-glucosamine 1-phosphate + UTP + H(+) = UDP-N-acetyl-alpha-D-glucosamine + diphosphate. It participates in nucleotide-sugar biosynthesis; UDP-N-acetyl-alpha-D-glucosamine biosynthesis; N-acetyl-alpha-D-glucosamine 1-phosphate from alpha-D-glucosamine 6-phosphate (route II): step 2/2. Its pathway is nucleotide-sugar biosynthesis; UDP-N-acetyl-alpha-D-glucosamine biosynthesis; UDP-N-acetyl-alpha-D-glucosamine from N-acetyl-alpha-D-glucosamine 1-phosphate: step 1/1. It functions in the pathway bacterial outer membrane biogenesis; LPS lipid A biosynthesis. Functionally, catalyzes the last two sequential reactions in the de novo biosynthetic pathway for UDP-N-acetylglucosamine (UDP-GlcNAc). The C-terminal domain catalyzes the transfer of acetyl group from acetyl coenzyme A to glucosamine-1-phosphate (GlcN-1-P) to produce N-acetylglucosamine-1-phosphate (GlcNAc-1-P), which is converted into UDP-GlcNAc by the transfer of uridine 5-monophosphate (from uridine 5-triphosphate), a reaction catalyzed by the N-terminal domain. The chain is Bifunctional protein GlmU from Thermosipho africanus (strain TCF52B).